We begin with the raw amino-acid sequence, 351 residues long: Divinyl chlorophyll a/b light-harvesting protein PcbA (351 aa).

Transmembrane regions (helical) follow at residues 27 to 47 (FIAAHAAHTGLIAFWAGAFTL), 64 to 84 (LIALPHLATLGIGFDEAGTFV), 89 to 109 (VTAIAIVHLVLSMVYGAGGLL), 202 to 222 (VMGGHAFLAFFMITGGAFHIA), 242 to 262 (AILSWSLAGIGWMAIVAAFWC), and 305 to 325 (LTNVHYFLGFFYIQGHLWHAL).

It belongs to the PsbB/PsbC family. IsiA/Pcb subfamily. In terms of assembly, the antenna complex consists of divinyl chlorophylls (a and b) and divinyl chlorophyll a/b binding proteins and binds more divinyl chlorophyll b than does the antenna complex from high-light-adapted Prochlorococcus. It depends on divinyl chlorophyll a as a cofactor. The cofactor is divinyl chlorophyll b.

The protein localises to the cellular thylakoid membrane. The antenna complex functions as a light receptor, it captures and delivers excitation energy to photosystems II and I. The Prochlorales pcb genes are not related to higher plant LHCs. This Prochlorococcus marinus (strain SARG / CCMP1375 / SS120) protein is Divinyl chlorophyll a/b light-harvesting protein PcbA (pcbA).